The sequence spans 248 residues: Adenosylcobinamide-GDP ribazoletransferase (248 aa).

Helical transmembrane passes span 24 to 44 (EINL…IGAW), 70 to 90 (IIIT…GLFS), 106 to 126 (VGAN…SLFL), 134 to 154 (IGWL…LLFA), 157 to 177 (TYAG…WWPV), 188 to 210 (LGLF…TIIY), and 228 to 248 (AGGQ…WGLI).

It belongs to the CobS family. The cofactor is Mg(2+).

The protein resides in the cell membrane. It catalyses the reaction alpha-ribazole + adenosylcob(III)inamide-GDP = adenosylcob(III)alamin + GMP + H(+). The catalysed reaction is alpha-ribazole 5'-phosphate + adenosylcob(III)inamide-GDP = adenosylcob(III)alamin 5'-phosphate + GMP + H(+). It participates in cofactor biosynthesis; adenosylcobalamin biosynthesis; adenosylcobalamin from cob(II)yrinate a,c-diamide: step 7/7. In terms of biological role, joins adenosylcobinamide-GDP and alpha-ribazole to generate adenosylcobalamin (Ado-cobalamin). Also synthesizes adenosylcobalamin 5'-phosphate from adenosylcobinamide-GDP and alpha-ribazole 5'-phosphate. The sequence is that of Adenosylcobinamide-GDP ribazoletransferase from Listeria monocytogenes serotype 4b (strain CLIP80459).